Consider the following 169-residue polypeptide: Disulfide bond formation protein B (169 aa).

Topologically, residues 1–14 (MNNLTLSLHRERRL) are cytoplasmic. Residues 15–31 (LVLLGLVCLALLAGALY) form a helical membrane-spanning segment. Over 32 to 49 (LQYVKNEDPCPLCIIQRY) the chain is Periplasmic. An intrachain disulfide couples C41 to C44. Residues 50–64 (FFVLIAVFAFIGAGM) form a helical membrane-spanning segment. Over 65–71 (ASGAGIA) the chain is Cytoplasmic. A helical transmembrane segment spans residues 72–89 (VIEALIVLSAAAGVGTAA). Residues 90 to 144 (RHLYVQLNPGFSCGFDALQPVVDSLPPAHWLPGVFKVAGLCETVYPPIFGILLPG) lie on the Periplasmic side of the membrane. C102 and C130 form a disulfide bridge. A helical transmembrane segment spans residues 145–163 (WALIAFALIVVPVAASLLR). At 164–169 (HRGRLR) the chain is on the cytoplasmic side.

This sequence belongs to the DsbB family.

The protein localises to the cell inner membrane. In terms of biological role, required for disulfide bond formation in some periplasmic proteins. Acts by oxidizing the DsbA protein. The chain is Disulfide bond formation protein B from Burkholderia thailandensis (strain ATCC 700388 / DSM 13276 / CCUG 48851 / CIP 106301 / E264).